A 397-amino-acid chain; its full sequence is Subtilisin-like protease 12 (397 aa).

Positions 1–19 are cleaved as a signal peptide; sequence MSIFKLMVIYFTLFWVVNA. A propeptide spanning residues 20–116 is cleaved from the precursor; it reads AQLLDLDSHG…VEPNREMKAA (97 aa). One can recognise an Inhibitor I9 domain in the interval 35-115; it reads YIVVMKNGVS…FVEPNREMKA (81 aa). Asn-123, Asn-136, and Asn-150 each carry an N-linked (GlcNAc...) asparagine glycan. Residues 125-397 enclose the Peptidase S8 domain; it reads TWGLARISHM…DKLLYNGSGA (273 aa). Residues Asp-157 and His-188 each act as charge relay system in the active site. 3 N-linked (GlcNAc...) asparagine glycosylation sites follow: Asn-249, Asn-305, and Asn-334. Residue Ser-343 is the Charge relay system of the active site. 2 N-linked (GlcNAc...) asparagine glycosylation sites follow: Asn-385 and Asn-393.

Belongs to the peptidase S8 family.

Its subcellular location is the secreted. Secreted subtilisin-like serine protease with keratinolytic activity that contributes to pathogenicity. In Arthroderma gypseum (strain ATCC MYA-4604 / CBS 118893) (Microsporum gypseum), this protein is Subtilisin-like protease 12 (SUB12).